Consider the following 428-residue polypeptide: UPF0597 protein BF3772 (428 aa).

Belongs to the UPF0597 family.

The chain is UPF0597 protein BF3772 from Bacteroides fragilis (strain YCH46).